The sequence spans 287 residues: Phosphatidylserine decarboxylase proenzyme (287 aa).

Catalysis depends on charge relay system; for autoendoproteolytic cleavage activity residues aspartate 90, histidine 147, and serine 252. Serine 252 functions as the Schiff-base intermediate with substrate; via pyruvic acid; for decarboxylase activity in the catalytic mechanism. Position 252 is a pyruvic acid (Ser); by autocatalysis (serine 252).

This sequence belongs to the phosphatidylserine decarboxylase family. PSD-B subfamily. Prokaryotic type I sub-subfamily. As to quaternary structure, heterodimer of a large membrane-associated beta subunit and a small pyruvoyl-containing alpha subunit. Pyruvate serves as cofactor. Is synthesized initially as an inactive proenzyme. Formation of the active enzyme involves a self-maturation process in which the active site pyruvoyl group is generated from an internal serine residue via an autocatalytic post-translational modification. Two non-identical subunits are generated from the proenzyme in this reaction, and the pyruvate is formed at the N-terminus of the alpha chain, which is derived from the carboxyl end of the proenzyme. The autoendoproteolytic cleavage occurs by a canonical serine protease mechanism, in which the side chain hydroxyl group of the serine supplies its oxygen atom to form the C-terminus of the beta chain, while the remainder of the serine residue undergoes an oxidative deamination to produce ammonia and the pyruvoyl prosthetic group on the alpha chain. During this reaction, the Ser that is part of the protease active site of the proenzyme becomes the pyruvoyl prosthetic group, which constitutes an essential element of the active site of the mature decarboxylase.

It localises to the cell membrane. It carries out the reaction a 1,2-diacyl-sn-glycero-3-phospho-L-serine + H(+) = a 1,2-diacyl-sn-glycero-3-phosphoethanolamine + CO2. It participates in phospholipid metabolism; phosphatidylethanolamine biosynthesis; phosphatidylethanolamine from CDP-diacylglycerol: step 2/2. Its function is as follows. Catalyzes the formation of phosphatidylethanolamine (PtdEtn) from phosphatidylserine (PtdSer). The polypeptide is Phosphatidylserine decarboxylase proenzyme (Pseudomonas entomophila (strain L48)).